The chain runs to 863 residues: uncharacterized protein (863 aa).

The N-terminal stretch at 1–29 (MHQSGSVSLCRSAISVLVATALYSPIALA) is a signal peptide. An Autotransporter domain is found at 595–863 (GVSYDTAMWS…NTQAGVVWTF (269 aa)).

The protein resides in the cell outer membrane. This is an uncharacterized protein from Escherichia coli (strain K12).